Here is a 197-residue protein sequence, read N- to C-terminus: Recombination protein RecR (197 aa).

The C4-type zinc-finger motif lies at 57–72; sequence CSICFAITEDDPCAIC. Positions 79-174 constitute a Toprim domain; sequence GTICVVENSQ…RISRLAHGIP (96 aa).

The protein belongs to the RecR family.

Functionally, may play a role in DNA repair. It seems to be involved in an RecBC-independent recombinational process of DNA repair. It may act with RecF and RecO. The protein is Recombination protein RecR of Pelobacter propionicus (strain DSM 2379 / NBRC 103807 / OttBd1).